Consider the following 497-residue polypeptide: MSQAVSSPLYAAIDLGSNSFHMLVVRHIDGSVQTMAKIKRKVRLAAGLDEHNALSLDAMQRGWDCLSLFAERLQDIPAENIRIVGTATLRTATNAGEFIAKANQILGHPIDVISGEEEAATIYKGVAHTSGGLGRRLVVDIGGASTELIIGEGFEAKALTSLKMGCVTWLERHFKDRQLTATNFNNAILAAKQMLDPILTQYTELGWNVCVGASGTVQALQEIMLAQGMDEVITLTKLKRLQKQAMLADHLEELDIEGLTLERALVFPSGLSILIAIFESLNIEAMTLAGGALREGLVYEMVQDLRQEDIRARTIRCVQTRYQIDSAYGDQVATLASKLLAQCGGEAWINEPQAEMLLRTAAKLHEIGLTIDFKKGGEHSAYLLQHLDLPGYTRAQKHYLGEIVRRYREQLTSLPEQYALSGTSGKRVLRLLRLAVLLSHRRSPALEPMVELSAQEDKLTLTLDGEWLAKNPLTRTELELEANRQTDIGWPLSIECH.

This sequence belongs to the GppA/Ppx family. GppA subfamily.

It catalyses the reaction guanosine 3'-diphosphate 5'-triphosphate + H2O = guanosine 3',5'-bis(diphosphate) + phosphate + H(+). Its pathway is purine metabolism; ppGpp biosynthesis; ppGpp from GTP: step 2/2. Functionally, catalyzes the conversion of pppGpp to ppGpp. Guanosine pentaphosphate (pppGpp) is a cytoplasmic signaling molecule which together with ppGpp controls the 'stringent response', an adaptive process that allows bacteria to respond to amino acid starvation, resulting in the coordinated regulation of numerous cellular activities. This chain is Guanosine-5'-triphosphate,3'-diphosphate pyrophosphatase, found in Vibrio cholerae serotype O1 (strain ATCC 39541 / Classical Ogawa 395 / O395).